A 652-amino-acid polypeptide reads, in one-letter code: DNA ligase (652 aa).

Residues 29 to 33 (DSEYD), 78 to 79 (SL), and Glu107 contribute to the NAD(+) site. Lys109 (N6-AMP-lysine intermediate) is an active-site residue. NAD(+) contacts are provided by Arg130, Glu164, Lys278, and Lys302. Zn(2+) contacts are provided by Cys395, Cys398, Cys413, and Cys418. The region spanning 577-652 (VADAALSGLT…VRDEAWLESL (76 aa)) is the BRCT domain.

Belongs to the NAD-dependent DNA ligase family. LigA subfamily. Requires Mg(2+) as cofactor. Mn(2+) serves as cofactor.

It carries out the reaction NAD(+) + (deoxyribonucleotide)n-3'-hydroxyl + 5'-phospho-(deoxyribonucleotide)m = (deoxyribonucleotide)n+m + AMP + beta-nicotinamide D-nucleotide.. Its function is as follows. DNA ligase that catalyzes the formation of phosphodiester linkages between 5'-phosphoryl and 3'-hydroxyl groups in double-stranded DNA using NAD as a coenzyme and as the energy source for the reaction. It is essential for DNA replication and repair of damaged DNA. This chain is DNA ligase, found in Streptococcus pneumoniae (strain Taiwan19F-14).